The sequence spans 120 residues: MAGKKPSHRAFKVADQIQRDLTQLLARLKDPRLGLVTLQGVEISPDYAHAKVFFSLLTGTPEQTQAALDQAAGFLRNGLFKRLQIHTVPTLHFVFDRSCERAADMNALIAKAVSTRAKED.

It belongs to the RbfA family. In terms of assembly, monomer. Binds 30S ribosomal subunits, but not 50S ribosomal subunits or 70S ribosomes.

Its subcellular location is the cytoplasm. Its function is as follows. One of several proteins that assist in the late maturation steps of the functional core of the 30S ribosomal subunit. Associates with free 30S ribosomal subunits (but not with 30S subunits that are part of 70S ribosomes or polysomes). Required for efficient processing of 16S rRNA. May interact with the 5'-terminal helix region of 16S rRNA. This chain is Ribosome-binding factor A, found in Verminephrobacter eiseniae (strain EF01-2).